A 181-amino-acid polypeptide reads, in one-letter code: Histone deacetylase complex subunit SAP30L (181 aa).

Residues 26–74 form an Atypical zinc finger; it reads CCLIDGGERCPRPAGNASFSKRVQKSISQKKLKLDIDKSVRHLYICDFH. The disordered stretch occupies residues 82-103; sequence RNKRKRKTSDDGGDSPEHETDV. Positions 83-88 match the Nuclear localization signal (NLS) motif; it reads NKRKRK. The segment at 85–87 is important for DNA and phosphoinositide binding; the sequence is RKR.

It belongs to the SAP30 family. As to quaternary structure, interacts with components of the histone deacetylase complex sin3a, hdac1 and hdac2. Binds histones and nucleosomes.

It is found in the nucleus. Its subcellular location is the nucleolus. In terms of biological role, functions as a transcription repressor, probably via its interaction with histone deacetylase complexes. Involved in the functional recruitment of the class 1 Sin3-histone deacetylase complex (HDAC) to the nucleolus. Binds DNA, apparently without sequence-specificity, and bends bound double-stranded DNA. Binds phosphoinositol phosphates (phosphoinositol 3-phosphate, phosphoinositol 4-phosphate and phosphoinositol 5-phosphate) via the same basic sequence motif that mediates DNA binding and nuclear import. In Xenopus tropicalis (Western clawed frog), this protein is Histone deacetylase complex subunit SAP30L (sap30l).